A 236-amino-acid polypeptide reads, in one-letter code: Small ribosomal subunit protein uS2c (236 aa).

It belongs to the universal ribosomal protein uS2 family.

It is found in the plastid. The protein localises to the chloroplast. The sequence is that of Small ribosomal subunit protein uS2c (rps2) from Oryza nivara (Indian wild rice).